The chain runs to 432 residues: Glutamyl-tRNA reductase (432 aa).

Substrate is bound by residues Thr50–Arg53, Ser110, Glu115–Gln117, and Gln121. Cys51 functions as the Nucleophile in the catalytic mechanism. NADP(+) is bound at residue Gly190–Gly195.

The protein belongs to the glutamyl-tRNA reductase family. Homodimer.

It carries out the reaction (S)-4-amino-5-oxopentanoate + tRNA(Glu) + NADP(+) = L-glutamyl-tRNA(Glu) + NADPH + H(+). Its pathway is porphyrin-containing compound metabolism; protoporphyrin-IX biosynthesis; 5-aminolevulinate from L-glutamyl-tRNA(Glu): step 1/2. Functionally, catalyzes the NADPH-dependent reduction of glutamyl-tRNA(Glu) to glutamate 1-semialdehyde (GSA). This is Glutamyl-tRNA reductase from Nitratiruptor sp. (strain SB155-2).